Reading from the N-terminus, the 204-residue chain is Leucyl/phenylalanyl-tRNA--protein transferase (204 aa).

Belongs to the L/F-transferase family.

It is found in the cytoplasm. The enzyme catalyses N-terminal L-lysyl-[protein] + L-leucyl-tRNA(Leu) = N-terminal L-leucyl-L-lysyl-[protein] + tRNA(Leu) + H(+). It carries out the reaction N-terminal L-arginyl-[protein] + L-leucyl-tRNA(Leu) = N-terminal L-leucyl-L-arginyl-[protein] + tRNA(Leu) + H(+). It catalyses the reaction L-phenylalanyl-tRNA(Phe) + an N-terminal L-alpha-aminoacyl-[protein] = an N-terminal L-phenylalanyl-L-alpha-aminoacyl-[protein] + tRNA(Phe). Its function is as follows. Functions in the N-end rule pathway of protein degradation where it conjugates Leu, Phe and, less efficiently, Met from aminoacyl-tRNAs to the N-termini of proteins containing an N-terminal arginine or lysine. The protein is Leucyl/phenylalanyl-tRNA--protein transferase of Rhizobium etli (strain ATCC 51251 / DSM 11541 / JCM 21823 / NBRC 15573 / CFN 42).